We begin with the raw amino-acid sequence, 147 residues long: Large ribosomal subunit protein uL11 (147 aa).

It belongs to the universal ribosomal protein uL11 family. As to quaternary structure, part of the ribosomal stalk of the 50S ribosomal subunit. Interacts with L10 and the large rRNA to form the base of the stalk. L10 forms an elongated spine to which L12 dimers bind in a sequential fashion forming a multimeric L10(L12)X complex. Post-translationally, one or more lysine residues are methylated.

In terms of biological role, forms part of the ribosomal stalk which helps the ribosome interact with GTP-bound translation factors. This is Large ribosomal subunit protein uL11 from Thermus thermophilus (strain ATCC BAA-163 / DSM 7039 / HB27).